Here is a 258-residue protein sequence, read N- to C-terminus: Imidazole glycerol phosphate synthase subunit HisF (258 aa).

Active-site residues include aspartate 11 and aspartate 130.

The protein belongs to the HisA/HisF family. Heterodimer of HisH and HisF.

The protein localises to the cytoplasm. It catalyses the reaction 5-[(5-phospho-1-deoxy-D-ribulos-1-ylimino)methylamino]-1-(5-phospho-beta-D-ribosyl)imidazole-4-carboxamide + L-glutamine = D-erythro-1-(imidazol-4-yl)glycerol 3-phosphate + 5-amino-1-(5-phospho-beta-D-ribosyl)imidazole-4-carboxamide + L-glutamate + H(+). It participates in amino-acid biosynthesis; L-histidine biosynthesis; L-histidine from 5-phospho-alpha-D-ribose 1-diphosphate: step 5/9. Functionally, IGPS catalyzes the conversion of PRFAR and glutamine to IGP, AICAR and glutamate. The HisF subunit catalyzes the cyclization activity that produces IGP and AICAR from PRFAR using the ammonia provided by the HisH subunit. This is Imidazole glycerol phosphate synthase subunit HisF from Xanthomonas campestris pv. campestris (strain B100).